Consider the following 622-residue polypeptide: Pesticidal crystal protein Cry2Ac (622 aa).

Belongs to the delta endotoxin family.

In terms of biological role, promotes colloidosmotic lysis by binding to the midgut epithelial cells of lepidopteran larvae. Has low activity on dipteran larvae. The protein is Pesticidal crystal protein Cry2Ac (cry2Ac) of Bacillus thuringiensis.